We begin with the raw amino-acid sequence, 356 residues long: Protein-arginine kinase (356 aa).

The Phosphagen kinase C-terminal domain maps to 24-254 (IVLSTRIRLA…HQLIQQEKAA (231 aa)). Residues 27–31 (STRIR), histidine 92, arginine 125, 176–180 (RASVM), and 207–212 (RGIYGE) contribute to the ATP site. Positions 337–342 (RDYRRA) match the RDXXRA motif of the pArg binding pocket involved in allosteric regulation motif.

It belongs to the ATP:guanido phosphotransferase family.

It carries out the reaction L-arginyl-[protein] + ATP = N(omega)-phospho-L-arginyl-[protein] + ADP + H(+). With respect to regulation, appears to be allosterically activated by the binding of pArg-containing polypeptides to the pArg-binding pocket localized in the C-terminal domain of McsB. Catalyzes the specific phosphorylation of arginine residues in a large number of proteins. Is part of the bacterial stress response system. Protein arginine phosphorylation has a physiologically important role and is involved in the regulation of many critical cellular processes, such as protein homeostasis, motility, competence, and stringent and stress responses, by regulating gene expression and protein activity. In Bacillus cytotoxicus (strain DSM 22905 / CIP 110041 / 391-98 / NVH 391-98), this protein is Protein-arginine kinase.